The primary structure comprises 182 residues: ATP synthase subunit delta (182 aa).

It belongs to the ATPase delta chain family. In terms of assembly, F-type ATPases have 2 components, F(1) - the catalytic core - and F(0) - the membrane proton channel. F(1) has five subunits: alpha(3), beta(3), gamma(1), delta(1), epsilon(1). F(0) has three main subunits: a(1), b(2) and c(10-14). The alpha and beta chains form an alternating ring which encloses part of the gamma chain. F(1) is attached to F(0) by a central stalk formed by the gamma and epsilon chains, while a peripheral stalk is formed by the delta and b chains.

It localises to the cell inner membrane. Its function is as follows. F(1)F(0) ATP synthase produces ATP from ADP in the presence of a proton or sodium gradient. F-type ATPases consist of two structural domains, F(1) containing the extramembraneous catalytic core and F(0) containing the membrane proton channel, linked together by a central stalk and a peripheral stalk. During catalysis, ATP synthesis in the catalytic domain of F(1) is coupled via a rotary mechanism of the central stalk subunits to proton translocation. This protein is part of the stalk that links CF(0) to CF(1). It either transmits conformational changes from CF(0) to CF(1) or is implicated in proton conduction. This is ATP synthase subunit delta from Bdellovibrio bacteriovorus (strain ATCC 15356 / DSM 50701 / NCIMB 9529 / HD100).